We begin with the raw amino-acid sequence, 300 residues long: UDP-3-O-acyl-N-acetylglucosamine deacetylase (300 aa).

3 residues coordinate Zn(2+): histidine 78, histidine 237, and aspartate 241. Catalysis depends on histidine 264, which acts as the Proton donor.

Belongs to the LpxC family. The cofactor is Zn(2+).

It catalyses the reaction a UDP-3-O-[(3R)-3-hydroxyacyl]-N-acetyl-alpha-D-glucosamine + H2O = a UDP-3-O-[(3R)-3-hydroxyacyl]-alpha-D-glucosamine + acetate. It functions in the pathway glycolipid biosynthesis; lipid IV(A) biosynthesis; lipid IV(A) from (3R)-3-hydroxytetradecanoyl-[acyl-carrier-protein] and UDP-N-acetyl-alpha-D-glucosamine: step 2/6. Functionally, catalyzes the hydrolysis of UDP-3-O-myristoyl-N-acetylglucosamine to form UDP-3-O-myristoylglucosamine and acetate, the committed step in lipid A biosynthesis. The protein is UDP-3-O-acyl-N-acetylglucosamine deacetylase of Acinetobacter baumannii (strain AB307-0294).